Reading from the N-terminus, the 73-residue chain is Neuropeptide-like protein 29 (73 aa).

The N-terminal stretch at 1–22 (MISTSSILVLVVLLACFMAASA) is a signal peptide. Tyrosine amide is present on residues Y29, Y39, Y47, Y55, and Y63. A Tryptophan amide modification is found at W71.

It belongs to the YARP (YGGW-amide related peptide) family. Weakly or not expressed in absence of infection. Upon infection by D.coniospora, it is expressed in hypoderm. Also expressed in perivulval cells when D.coniospora spores adhere to this region. Expressed in hypodermis upon physical injury.

The protein localises to the secreted. Antimicrobial peptides that have antibacterial activity against the Gram-negative bacteria S.marcescens. Has antifungal activity against D.coniospora. May play a role in response to physical injury and osmotic stress. Through the neuropeptide receptor nlp-29, induces sleep upon activation of the innate immune response to molting and injury to the adult epidermis. This Caenorhabditis elegans protein is Neuropeptide-like protein 29.